Reading from the N-terminus, the 193-residue chain is 3-isopropylmalate dehydratase small subunit (193 aa).

This sequence belongs to the LeuD family. LeuD type 1 subfamily. In terms of assembly, heterodimer of LeuC and LeuD.

The enzyme catalyses (2R,3S)-3-isopropylmalate = (2S)-2-isopropylmalate. It participates in amino-acid biosynthesis; L-leucine biosynthesis; L-leucine from 3-methyl-2-oxobutanoate: step 2/4. Functionally, catalyzes the isomerization between 2-isopropylmalate and 3-isopropylmalate, via the formation of 2-isopropylmaleate. This is 3-isopropylmalate dehydratase small subunit from Bacillus cereus (strain 03BB102).